The chain runs to 675 residues: MAGPAPPVADELPGPAARRLYSRMEASCLELALEGERLCKAGDFKTGVAFFEAAVQVGTEDLKTLSAIYSQLGNAYFYLKEHGRALEYHKHDLLLARTIGDRMGEAKASGNLGNTLKVLGRFDEAAVCCQRHLSIAQEQGDKVGEARALYNIGNVYHAKGKQLSWNAANATQDPGHLPPDVRETLCKASEFYERNLSLVKELGDRAAQGRAYGNLGNTHYLLGNFTEATTFHKERLAIAKEFGDKAAERRAYSNLGNAHVFLGRFDVAAEYYKKTLQLSRQLRDQAVEAQACYSLGNTYTLLQDYERAAEYHLRHLLIAQELADRVGEGRACWSLGNAYVSMGRPAQALTFAKKHLQISQEIGDRHGELTARMNVAQLQLVLGRLTSPAASEKPDLAGYEAQGARPKRTQRLSAETWDLLRLPLEREQNGDSHHSGDWRGPSRDSLPLPVRSRKYQEGPDAERRPREGSHSPLDSADVRVHVPRTSIPRAPSSDEECFFDLLTKFQSSRMDDQRCPLDDGQAGAAEATAAPTLEDRIAQPSMTASPQTEEFFDLIASSQSRRLDDQRASVGSLPGLRITHSNAGHLRGHGEPQEPGDDFFNMLIKYQSSRIDDQRCPPPDVLPRGPTMPDEDFFSLIQRVQAKRMDEQRVDLAGGPEQGAGGPPEPQQQCQPGAS.

The tract at residues 1–509 (MAGPAPPVAD…DLLTKFQSSR (509 aa)) is mediates association with membranes. TPR repeat units lie at residues 28-61 (CLEL…GTED), 66-99 (SAIY…ARTI), 106-139 (AKAS…AQEQ), 146-181 (ARAL…PPDV), 183-202 (ETLC…VKEL), 209-242 (GRAY…AKEF), 249-282 (RRAY…SRQL), 289-322 (AQAC…AQEL), and 329-362 (GRAC…SQEI). The interval 364 to 487 (DRHGELTARM…VRVHVPRTSI (124 aa)) is interaction with STK11/LKB1. The tract at residues 391–412 (SEKPDLAGYEAQGARPKRTQRL) is disordered. Residue S413 is modified to Phosphoserine. An Omega-N-methylarginine modification is found at R421. Over residues 424 to 442 (LEREQNGDSHHSGDWRGPS) the composition is skewed to basic and acidic residues. The segment at 424–492 (LEREQNGDSH…PRTSIPRAPS (69 aa)) is disordered. Residues S445, S469, S471, S492, and S493 each carry the phosphoserine modification. Positions 454 to 469 (KYQEGPDAERRPREGS) are enriched in basic and acidic residues. The GoLoco 1 domain maps to 495–517 (EECFFDLLTKFQSSRMDDQRCPL). Residues S545 and S569 each carry the phosphoserine modification. 3 GoLoco domains span residues 548–570 (TEEF…RASV), 596–618 (GDDF…RCPP), and 630–652 (DEDF…RVDL). 2 disordered regions span residues 610 to 630 (RIDD…TMPD) and 644 to 675 (RMDE…PGAS).

Belongs to the GPSM family. As to quaternary structure, interacts with GNAI1, GNAI2 and GNAI3 preferentially in their GDP-bound state. May also interact with GNAO1. Interacts with STK11/LKB1 and MACF1. Interacts with INSC/inscuteable and FRMPD1. Post-translationally, phosphorylation regulates interaction with G(i/o) alpha. In terms of tissue distribution, expressed in intestinal cells.

It is found in the cytoplasm. The protein localises to the cytosol. It localises to the endoplasmic reticulum membrane. Its subcellular location is the golgi apparatus membrane. The protein resides in the cell membrane. Guanine nucleotide dissociation inhibitor (GDI) which functions as a receptor-independent activator of heterotrimeric G-protein signaling. Keeps G(i/o) alpha subunit in its GDP-bound form thus uncoupling heterotrimeric G-proteins signaling from G protein-coupled receptors. Controls spindle orientation and asymmetric cell fate of cerebral cortical progenitors. May also be involved in macroautophagy in intestinal cells. May play a role in drug addiction. This Homo sapiens (Human) protein is G-protein-signaling modulator 1 (GPSM1).